The following is a 513-amino-acid chain: Sterol 14-alpha demethylase (513 aa).

The helical transmembrane segment at 10 to 30 (FTLVSAYAAAGLLAIIVLNLL) threads the bilayer. 2 N-linked (GlcNAc...) asparagine glycosylation sites follow: N37 and N406. C453 lines the heme pocket.

This sequence belongs to the cytochrome P450 family. It depends on heme as a cofactor.

The protein resides in the endoplasmic reticulum membrane. It carries out the reaction a 14alpha-methyl steroid + 3 reduced [NADPH--hemoprotein reductase] + 3 O2 = a Delta(14) steroid + formate + 3 oxidized [NADPH--hemoprotein reductase] + 4 H2O + 4 H(+). The catalysed reaction is a 14alpha-methyl steroid + reduced [NADPH--hemoprotein reductase] + O2 = a 14alpha-hydroxymethyl steroid + oxidized [NADPH--hemoprotein reductase] + H2O + H(+). The enzyme catalyses a 14alpha-hydroxymethyl steroid + reduced [NADPH--hemoprotein reductase] + O2 = a 14alpha-formyl steroid + oxidized [NADPH--hemoprotein reductase] + 2 H2O + H(+). It catalyses the reaction a 14alpha-formyl steroid + reduced [NADPH--hemoprotein reductase] + O2 = a Delta(14) steroid + formate + oxidized [NADPH--hemoprotein reductase] + H2O + 2 H(+). It carries out the reaction lanosterol + 3 reduced [NADPH--hemoprotein reductase] + 3 O2 = 4,4-dimethyl-5alpha-cholesta-8,14,24-trien-3beta-ol + formate + 3 oxidized [NADPH--hemoprotein reductase] + 4 H2O + 4 H(+). The catalysed reaction is lanosterol + reduced [NADPH--hemoprotein reductase] + O2 = 32-hydroxylanosterol + oxidized [NADPH--hemoprotein reductase] + H2O + H(+). The enzyme catalyses 32-hydroxylanosterol + reduced [NADPH--hemoprotein reductase] + O2 = 32-oxolanosterol + oxidized [NADPH--hemoprotein reductase] + 2 H2O + H(+). It catalyses the reaction 32-oxolanosterol + reduced [NADPH--hemoprotein reductase] + O2 = 4,4-dimethyl-5alpha-cholesta-8,14,24-trien-3beta-ol + formate + oxidized [NADPH--hemoprotein reductase] + H2O + 2 H(+). It carries out the reaction eburicol + 3 reduced [NADPH--hemoprotein reductase] + 3 O2 = 14-demethyleburicol + formate + 3 oxidized [NADPH--hemoprotein reductase] + 4 H2O + 4 H(+). The catalysed reaction is eburicol + reduced [NADPH--hemoprotein reductase] + O2 = 32-hydroxyeburicol + oxidized [NADPH--hemoprotein reductase] + H2O + H(+). The enzyme catalyses 32-hydroxyeburicol + reduced [NADPH--hemoprotein reductase] + O2 = 32-oxoeburicol + oxidized [NADPH--hemoprotein reductase] + 2 H2O + H(+). It catalyses the reaction 32-oxoeburicol + reduced [NADPH--hemoprotein reductase] + O2 = 14-demethyleburicol + formate + oxidized [NADPH--hemoprotein reductase] + H2O + 2 H(+). The protein operates within steroid biosynthesis; sterol biosynthesis. Sterol 14alpha-demethylase, encoded by cyp51A, cyp51B and cyp51C, that plays a critical role in the third module of ergosterol biosynthesis pathway, being ergosterol the major sterol component in fungal membranes that participates in a variety of functions. The third module or late pathway involves the ergosterol synthesis itself through consecutive reactions that mainly occur in the endoplasmic reticulum (ER) membrane. In filamentous fungi, during the initial step of this module, lanosterol (lanosta-8,24-dien-3beta-ol) can be metabolized to eburicol. Sterol 14alpha-demethylase catalyzes the three-step oxidative removal of the 14alpha-methyl group (C-32) of both these sterols in the form of formate, and converts eburicol and lanosterol to 14-demethyleburicol (4,4,24-trimethylergosta-8,14,24(28)-trienol) and 4,4-dimethyl-5alpha-cholesta-8,14,24-trien-3beta-ol, respectively, which are further metabolized by other enzymes in the pathway to ergosterol. Can also use substrates not intrinsic to fungi, such as 24,25-dihydrolanosterol (DHL), producing 4,4'-dimethyl-8,14-cholestadien-3-beta-ol, but at lower rates than the endogenous substrates. Its function is as follows. As a target of azole drugs, plays a crucial role in azole susceptibility. The chain is Sterol 14-alpha demethylase from Aspergillus flavus (strain ATCC 200026 / FGSC A1120 / IAM 13836 / NRRL 3357 / JCM 12722 / SRRC 167).